A 95-amino-acid chain; its full sequence is Small ribosomal subunit protein bS6 (95 aa).

The protein belongs to the bacterial ribosomal protein bS6 family.

Binds together with bS18 to 16S ribosomal RNA. This Shouchella clausii (strain KSM-K16) (Alkalihalobacillus clausii) protein is Small ribosomal subunit protein bS6.